Reading from the N-terminus, the 139-residue chain is Low molecular weight protein-tyrosine-phosphatase PtpB (139 aa).

The Nucleophile role is filled by C7. The active site involves R13. D111 (proton donor) is an active-site residue.

It belongs to the low molecular weight phosphotyrosine protein phosphatase family.

The enzyme catalyses O-phospho-L-tyrosyl-[protein] + H2O = L-tyrosyl-[protein] + phosphate. In terms of biological role, dephosphorylates the phosphotyrosine-containing proteins. This Staphylococcus epidermidis (strain ATCC 35984 / DSM 28319 / BCRC 17069 / CCUG 31568 / BM 3577 / RP62A) protein is Low molecular weight protein-tyrosine-phosphatase PtpB (ptpB).